Here is a 297-residue protein sequence, read N- to C-terminus: 4-hydroxybenzoate octaprenyltransferase (297 aa).

The next 9 helical transmembrane spans lie at 29-49, 55-75, 102-122, 124-141, 146-166, 169-189, 219-239, 241-261, and 270-290; these read IGTY…AEGV, LFIF…VNDF, AWTL…LTNA, TVYL…YPFM, FYPQ…AFTA, GSLP…TVAY, VIIV…GVRF, LGQW…WEFW, and VCFK…AGIV.

Belongs to the UbiA prenyltransferase family. The cofactor is Mg(2+).

It localises to the cell inner membrane. It catalyses the reaction all-trans-octaprenyl diphosphate + 4-hydroxybenzoate = 4-hydroxy-3-(all-trans-octaprenyl)benzoate + diphosphate. The protein operates within cofactor biosynthesis; ubiquinone biosynthesis. Catalyzes the prenylation of para-hydroxybenzoate (PHB) with an all-trans polyprenyl group. Mediates the second step in the final reaction sequence of ubiquinone-8 (UQ-8) biosynthesis, which is the condensation of the polyisoprenoid side chain with PHB, generating the first membrane-bound Q intermediate 3-octaprenyl-4-hydroxybenzoate. The polypeptide is 4-hydroxybenzoate octaprenyltransferase (Stutzerimonas stutzeri (strain A1501) (Pseudomonas stutzeri)).